A 246-amino-acid polypeptide reads, in one-letter code: Orotidine 5'-phosphate decarboxylase (246 aa).

Residues D22, K44, 71–80, T130, R191, Q201, G221, and R222 contribute to the substrate site; that span reads DLKYHDIPHT. K73 (proton donor) is an active-site residue.

Belongs to the OMP decarboxylase family. Type 1 subfamily. In terms of assembly, homodimer.

The catalysed reaction is orotidine 5'-phosphate + H(+) = UMP + CO2. The protein operates within pyrimidine metabolism; UMP biosynthesis via de novo pathway; UMP from orotate: step 2/2. Functionally, catalyzes the decarboxylation of orotidine 5'-monophosphate (OMP) to uridine 5'-monophosphate (UMP). This is Orotidine 5'-phosphate decarboxylase from Neisseria meningitidis serogroup B (strain ATCC BAA-335 / MC58).